The sequence spans 430 residues: Enolase (430 aa).

Residue glutamine 168 participates in (2R)-2-phosphoglycerate binding. Glutamate 210 serves as the catalytic Proton donor. Positions 247, 288, and 315 each coordinate Mg(2+). Positions 340, 369, 370, and 391 each coordinate (2R)-2-phosphoglycerate. The active-site Proton acceptor is the lysine 340.

The protein belongs to the enolase family. It depends on Mg(2+) as a cofactor.

The protein resides in the cytoplasm. It localises to the secreted. The protein localises to the cell surface. It catalyses the reaction (2R)-2-phosphoglycerate = phosphoenolpyruvate + H2O. It functions in the pathway carbohydrate degradation; glycolysis; pyruvate from D-glyceraldehyde 3-phosphate: step 4/5. In terms of biological role, catalyzes the reversible conversion of 2-phosphoglycerate (2-PG) into phosphoenolpyruvate (PEP). It is essential for the degradation of carbohydrates via glycolysis. The protein is Enolase of Rippkaea orientalis (strain PCC 8801 / RF-1) (Cyanothece sp. (strain PCC 8801)).